A 156-amino-acid chain; its full sequence is S-ribosylhomocysteine lyase (156 aa).

Fe cation-binding residues include His-56, His-60, and Cys-123.

The protein belongs to the LuxS family. Homodimer. It depends on Fe cation as a cofactor.

It carries out the reaction S-(5-deoxy-D-ribos-5-yl)-L-homocysteine = (S)-4,5-dihydroxypentane-2,3-dione + L-homocysteine. Functionally, involved in the synthesis of autoinducer 2 (AI-2) which is secreted by bacteria and is used to communicate both the cell density and the metabolic potential of the environment. The regulation of gene expression in response to changes in cell density is called quorum sensing. Catalyzes the transformation of S-ribosylhomocysteine (RHC) to homocysteine (HC) and 4,5-dihydroxy-2,3-pentadione (DPD). In Staphylococcus haemolyticus (strain JCSC1435), this protein is S-ribosylhomocysteine lyase.